The following is a 396-amino-acid chain: Elongation factor Tu (396 aa).

Residues 10–206 form the tr-type G domain; sequence KPHCNIGTIG…AVDAYIPQPE (197 aa). Positions 19 to 26 are G1; that stretch reads GHVDHGKT. 19–26 serves as a coordination point for GTP; it reads GHVDHGKT. Position 26 (threonine 26) interacts with Mg(2+). The interval 60 to 64 is G2; sequence GITIS. A G3 region spans residues 81–84; that stretch reads DCPG. GTP contacts are provided by residues 81 to 85 and 136 to 139; these read DCPGH and NKCD. The interval 136–139 is G4; the sequence is NKCD. Positions 174–176 are G5; the sequence is SAL.

Belongs to the TRAFAC class translation factor GTPase superfamily. Classic translation factor GTPase family. EF-Tu/EF-1A subfamily. As to quaternary structure, monomer.

Its subcellular location is the cytoplasm. The enzyme catalyses GTP + H2O = GDP + phosphate + H(+). In terms of biological role, GTP hydrolase that promotes the GTP-dependent binding of aminoacyl-tRNA to the A-site of ribosomes during protein biosynthesis. This chain is Elongation factor Tu, found in Rhodopseudomonas palustris (strain BisB18).